A 445-amino-acid polypeptide reads, in one-letter code: Xylose isomerase (445 aa).

Active-site residues include H107 and D110. E238, E274, H277, D302, D313, D315, and D345 together coordinate Mg(2+).

This sequence belongs to the xylose isomerase family. In terms of assembly, homotetramer. Mg(2+) is required as a cofactor.

It localises to the cytoplasm. The enzyme catalyses alpha-D-xylose = alpha-D-xylulofuranose. This Bacillus cereus (strain ATCC 10987 / NRS 248) protein is Xylose isomerase.